Here is a 719-residue protein sequence, read N- to C-terminus: 1,4-alpha-glucan branching enzyme GlgB (719 aa).

Catalysis depends on D400, which acts as the Nucleophile. E453 serves as the catalytic Proton donor.

Belongs to the glycosyl hydrolase 13 family. GlgB subfamily. Monomer.

It catalyses the reaction Transfers a segment of a (1-&gt;4)-alpha-D-glucan chain to a primary hydroxy group in a similar glucan chain.. Its pathway is glycan biosynthesis; glycogen biosynthesis. Its function is as follows. Catalyzes the formation of the alpha-1,6-glucosidic linkages in glycogen by scission of a 1,4-alpha-linked oligosaccharide from growing alpha-1,4-glucan chains and the subsequent attachment of the oligosaccharide to the alpha-1,6 position. This Chlamydia caviae (strain ATCC VR-813 / DSM 19441 / 03DC25 / GPIC) (Chlamydophila caviae) protein is 1,4-alpha-glucan branching enzyme GlgB.